The following is a 536-amino-acid chain: Mannuronan C5-epimerase (536 aa).

A signal peptide spans 1-36 (MNSHASNGRSRNWPHALLESALLTSALLMASSVALA). 5 PbH1 repeats span residues 298–320 (TRDF…DPHD), 322–345 (SHGL…IISR), 347–369 (VDNS…VLDR), 371–393 (SVGN…TLYE), and 394–416 (SGNN…RVRN). The active-site Proton acceptor is His-319.

This sequence belongs to the D-mannuronate C5-epimerase family.

Its subcellular location is the periplasm. The enzyme catalyses [(1-&gt;4)-beta-D-mannuronosyl](n) = [alginate](n). It functions in the pathway glycan biosynthesis; alginate biosynthesis. Catalyzes the epimerization of beta-D-mannuronate to alpha-L-guluronate during the synthesis of the linear polysaccharide alginate. In addition, is part of a periplasmic protein complex that protects alginate from degradation by AlgL by channeling the newly formed alginate polymer through a scaffold that transfers the alginate polymer through the periplasmic space to the outer membrane secretin AlgE. The polypeptide is Mannuronan C5-epimerase (algG) (Pseudomonas syringae pv. tomato (strain ATCC BAA-871 / DC3000)).